The chain runs to 124 residues: MAIAKEDILAAVEGMTVLELNELVKAFEEKFGVSAAAVAVAGPAGGGAAAAAEEKTEFTVVLAEAGANKVSVIKAVRELTGLGLKEAKDLVDGAPKPVKEGVDKAAAEEAKKKLEEAGAKVEVK.

The protein belongs to the bacterial ribosomal protein bL12 family. Homodimer. Part of the ribosomal stalk of the 50S ribosomal subunit. Forms a multimeric L10(L12)X complex, where L10 forms an elongated spine to which 2 to 4 L12 dimers bind in a sequential fashion. Binds GTP-bound translation factors.

Functionally, forms part of the ribosomal stalk which helps the ribosome interact with GTP-bound translation factors. Is thus essential for accurate translation. The polypeptide is Large ribosomal subunit protein bL12 (Burkholderia cenocepacia (strain HI2424)).